Reading from the N-terminus, the 319-residue chain is Methionyl-tRNA formyltransferase (319 aa).

114-117 (SLLP) contacts (6S)-5,6,7,8-tetrahydrofolate.

It belongs to the Fmt family.

It catalyses the reaction L-methionyl-tRNA(fMet) + (6R)-10-formyltetrahydrofolate = N-formyl-L-methionyl-tRNA(fMet) + (6S)-5,6,7,8-tetrahydrofolate + H(+). Functionally, attaches a formyl group to the free amino group of methionyl-tRNA(fMet). The formyl group appears to play a dual role in the initiator identity of N-formylmethionyl-tRNA by promoting its recognition by IF2 and preventing the misappropriation of this tRNA by the elongation apparatus. The chain is Methionyl-tRNA formyltransferase from Acinetobacter baylyi (strain ATCC 33305 / BD413 / ADP1).